The chain runs to 2151 residues: Calpain-type cysteine protease DEK1 (2151 aa).

A signal peptide spans 1 to 32 (MEGDERGVLLACVISGTLFTVFGSGSFWILWA). The Extracellular segment spans residues 33 to 69 (VNWRPWRLYSWIFARKWPKVLQGPQLDILCGVLSLFA). The chain crosses the membrane as a helical span at residues 70 to 90 (WIVVVSPIAILIGWGSWLIVI). Over 91-94 (LDRH) the chain is Cytoplasmic. A helical transmembrane segment spans residues 95 to 115 (IIGLAIIMAGTALLLAFYSIM). The Extracellular segment spans residues 116 to 126 (LWWRTQWQSSR). The chain crosses the membrane as a helical span at residues 127-147 (AVALLLLLGVALLCAYELCAV). At 148 to 163 (YVTAGAHASQQYSPSG) the chain is on the cytoplasmic side. Residues 164–184 (FFFGVSAIALAINMLFICRMV) traverse the membrane as a helical segment. Topologically, residues 185–235 (FNGNGLDVDEYVRRAYKFAYSDCIEVGPVACLPEPPDPNELYPRQTSRASH) are extracellular. The helical transmembrane segment at 236–256 (LGLLYLGSLVVLLAYSVLYGL) threads the bilayer. Residues 257 to 263 (TARESRW) are Cytoplasmic-facing. Residues 264–284 (LGGITSAAVIVLDWNIGACLY) traverse the membrane as a helical segment. The Extracellular portion of the chain corresponds to 285 to 293 (GFKLLQNRV). The helical transmembrane segment at 294–314 (LALFVAGISRLFLICFGIHYW) threads the bilayer. Over 315–319 (YLGHC) the chain is Cytoplasmic. The chain crosses the membrane as a helical span at residues 320–340 (ISYIFVASVLSGAAVSRHLSI). The Extracellular segment spans residues 341–615 (TDPSAARRDA…LLLHHVAGTP (275 aa)). Disordered regions lie at residues 363–393 (RRKE…GHTG) and 405–442 (CTAD…SCRS). Positions 369–388 (SSSSSSDGCGSSIKRSSSID) are enriched in low complexity. Over residues 405-420 (CTADNLTRTGSSQEGI) the composition is skewed to polar residues. The span at 430–442 (RPSLGLRSSSCRS) shows a compositional bias: low complexity. Residues 616–636 (ERAWGLFSLVFILETIIVAIF) traverse the membrane as a helical segment. Residues 637-652 (RPKTITIINSSHQQFE) lie on the Cytoplasmic side of the membrane. A helical membrane pass occupies residues 653 to 673 (FGFSVLLLSPVVCSIMAFLRS). At 674 to 686 (LQVEEMALTSKSR) the chain is on the extracellular side. Residues 687-707 (KYGFVAWLLSTSVGLSLSFLS) form a helical membrane-spanning segment. The Cytoplasmic segment spans residues 708–711 (KSSV). Residues 712-732 (LLGISLTVPLMAACLSIAVPI) form a helical membrane-spanning segment. Residues 733–760 (WMHNGYQFWVPQLSCGDQARDLRSPRIK) are Extracellular-facing. The helical transmembrane segment at 761-782 (GFILWICVVLFAGSVISLGAII) threads the bilayer. The Cytoplasmic portion of the chain corresponds to 783–813 (SAKPLDDLKYKLFSARENNVTSPYTSSVYLG). Residues 814–834 (WAMSSGIALVVTAILPIVSWF) traverse the membrane as a helical segment. Residues 835–844 (ATYRFSHSSA) are Extracellular-facing. The helical transmembrane segment at 845–865 (VCLMIFSVVLVAFCGTSYLEV) threads the bilayer. At 866–878 (VKSRDDQLPTKGD) the chain is on the cytoplasmic side. Residues 879–899 (FLAALLPLACIPALLSLCCGM) form a helical membrane-spanning segment. At 900–912 (VKWKDDCWILSRG) the chain is on the extracellular side. The helical transmembrane segment at 913–933 (VYVFFSIGLLLLFGAIAAVIA) threads the bilayer. The Cytoplasmic portion of the chain corresponds to 934-936 (VKP). Residues 937–957 (WTIGVSFLLVLFLMVVTIGVI) form a helical membrane-spanning segment. Topologically, residues 958-971 (HLWASNNFYLTRKQ) are extracellular. The chain crosses the membrane as a helical span at residues 972 to 992 (TSFVCFLALLLGLAAFLLGWH). Residues 993-1006 (QDKAFAGASVGYFT) lie on the Cytoplasmic side of the membrane. The chain crosses the membrane as a helical span at residues 1007 to 1027 (FLSLLAGRALAVLLSPPIVVY). Over 1028 to 1050 (SPRVLPVYVYDAHADCGKNVSAA) the chain is Extracellular. Residues 1051–1071 (FLVLYGIALATEGWGVVASLI) traverse the membrane as a helical segment. Over 1072–2151 (IYPPFAGAAV…TKASIVLEAL (1080 aa)) the chain is Cytoplasmic. 2 consecutive Calpain catalytic domains span residues 1407 to 1600 (SGKH…DMID) and 1695 to 1997 (QFTD…CRVY). Residues C1761, H1919, and N1939 contribute to the active site.

This sequence belongs to the peptidase C2 family. Post-translationally, autocatalytic proteolytic cleavage leading to the production of mainly cytoplasmic localized subproducts of about 85 and 120 kDa. As to expression, mostly expressed in meristems and organ primordia. Expressed at low levels in young and germinating seeds at 10 ppm and in seedling roots at 67 ppm. Present in most tissues at a low level.

Its subcellular location is the cell membrane. The protein resides in the endosome membrane. It is found in the endoplasmic reticulum membrane. The protein localises to the cytoplasm. Functionally, essential protease involved in epiderm development. Required for aleurone cell development in the endosperm probably by maintaining and restricting the aleurone and embryonic epidermal L1 cell-layer fates as well as meristems organization. Involved in the maintenance of adaxial/abaxial axis information in developing leaves, probably by regulating cell proliferation and expansion. Does not need calcium ions to be active. Required for the formation of giant cells in sepals by determining cell fate and promoting endoreplication. The polypeptide is Calpain-type cysteine protease DEK1 (Arabidopsis thaliana (Mouse-ear cress)).